The following is a 624-amino-acid chain: MATVLSRALKLPGKKSPDLGEYDPLTQADSDESEDDLVLNLQQKNGGVKNGKSALGDLPEPDSDADVAGAAKPHLSEVTPEGFPSEPLGGLEQKATSPLVSYVRTSVFLLTLVISMVLVLLCAFLIPCPPRDLHSAWSRRLGSQGGGDLSPLELADVNRDGLRDVLLTFVTTRNGTEGGVGSQPTADLVCLSGMNGSTLWSSPLPEEAQDVTCLDLIPGSVAKTICLVTGTRKMLSAFNATSGKVLWTLNPNHLSNGTLAAPVVVLPDLDEDGVRDLVVLAIGELQPDLCFLLVSGRTGSPVGRPVKYNIVGVGNLIGPQVYITASGAVYILFGFGNIQAVALRDIFVQAQNRDSSPPSLQIEEPEWEKHRSVNLSELIDVYSDGVELLQLVKAPDSNSSSLLITTRQGLVLLRGQDLTPHWKLNLQGLRSQPTPGYFTDDQTLDFLLQTQDGDGMKKMTVVDGGSGSIVWSYSIPCHMKETPTTSAITSDQKSVFLFWAEALTAASLSSDDSSGAEPPGLYHLYLLHPAFPSILLDLSNTTGIVTASEVGINDIWKDAFYVTRTTGMSPEGHPTSLVVSKLSLRWALMEGQMVQLKETTPKIGRGELRRFLSRIKFVDSPYQI.

Residues 1-91 (MATVLSRALK…GFPSEPLGGL (91 aa)) are disordered. Residue S16 is modified to Phosphoserine. T26 is modified (phosphothreonine). Residues S30, S33, and S63 each carry the phosphoserine modification. A helical transmembrane segment spans residues 107–127 (VFLLTLVISMVLVLLCAFLIP).

The protein belongs to the FAM234 family.

Its subcellular location is the membrane. It localises to the golgi outpost. It is found in the cytoplasm. The protein resides in the cytoskeleton. The protein localises to the microtubule organizing center. This chain is Protein FAM234B, found in Mus musculus (Mouse).